We begin with the raw amino-acid sequence, 595 residues long: Inactive metallocarboxypeptidase ecm14 (595 aa).

The signal sequence occupies residues 1–22 (MYRPDHVFVILCAVFFTGQVTA). Positions 23 to 178 (VPAGTGITHP…MIYESQYPSR (156 aa)) are excised as a propeptide. One can recognise a Peptidase M14 domain in the interval 206 to 527 (NYQPFPVILQ…NSVLVLGHFL (322 aa)). 2 residues coordinate Zn(2+): H270 and E273. Substrate contacts are provided by residues 270–273 (HARE), R328, and 345–346 (DR). A disulfide bridge links C339 with C362. The N-linked (GlcNAc...) asparagine glycan is linked to N386. H402 provides a ligand contact to Zn(2+). Position 403 to 404 (403 to 404 (SY)) interacts with substrate.

This sequence belongs to the peptidase M14 family. The cofactor is Zn(2+).

It localises to the vacuole. It is found in the secreted. Its function is as follows. Inactive carboxypeptidase that may play a role in cell wall organization and biogenesis. This is Inactive metallocarboxypeptidase ecm14 (ecm14) from Talaromyces marneffei (strain ATCC 18224 / CBS 334.59 / QM 7333) (Penicillium marneffei).